We begin with the raw amino-acid sequence, 86 residues long: UPF0297 protein BBR47_19030 (86 aa).

Belongs to the UPF0297 family.

In Brevibacillus brevis (strain 47 / JCM 6285 / NBRC 100599), this protein is UPF0297 protein BBR47_19030.